The sequence spans 232 residues: Large ribosomal subunit protein uL1 (232 aa).

It belongs to the universal ribosomal protein uL1 family. Part of the 50S ribosomal subunit.

Binds directly to 23S rRNA. The L1 stalk is quite mobile in the ribosome, and is involved in E site tRNA release. In terms of biological role, protein L1 is also a translational repressor protein, it controls the translation of the L11 operon by binding to its mRNA. The protein is Large ribosomal subunit protein uL1 of Stenotrophomonas maltophilia (strain K279a).